Consider the following 930-residue polypeptide: Nonribosomal peptide synthetase acyN (930 aa).

The segment at 15–436 is adenylation (A) domain; the sequence is LDPQDNKISV…AGRAKETIIV (422 aa). The region spanning 567–646 is the Carrier domain; sequence APSNETEATI…GLAGTLETLM (80 aa). Residue Ser604 is modified to O-(pantetheine 4'-phosphoryl)serine. Positions 665–914 are thioesterase (TE) domain; it reads PLWLVHPGVG…HYTMLGPDNI (250 aa).

The protein belongs to the NRP synthetase family.

The catalysed reaction is 2 3-phenylpyruvate + 2 ATP = polyporic acid + 2 AMP + 2 diphosphate + H(+). Its pathway is secondary metabolite biosynthesis. Its activity is regulated as follows. Hydroxyphenylpyruvate acts more like a competitive inhibitor rather than a substrate. Its function is as follows. Nonribosomal peptide synthetase that mediates the biosynthesis of polyporic acid via the condensation of 2 phenylpyruvate units. Polyporic acid is further hydroxylaed by the cytochrome P450 monooxygenase MO6277 into less toxic ascocorynin. The sequence is that of Nonribosomal peptide synthetase acyN from Ascocoryne sarcoides (Purple jellydisc fungus).